The sequence spans 171 residues: uncharacterized protein (171 aa).

This is an uncharacterized protein from Haemophilus influenzae (strain ATCC 51907 / DSM 11121 / KW20 / Rd).